Consider the following 358-residue polypeptide: Chorismate synthase (358 aa).

Residues arginine 48 and arginine 54 each contribute to the NADP(+) site. Residues 125–127 (RSS), glycine 282, 297–301 (KPPAS), and arginine 323 each bind FMN.

The protein belongs to the chorismate synthase family. In terms of assembly, homotetramer. Requires FMNH2 as cofactor.

It catalyses the reaction 5-O-(1-carboxyvinyl)-3-phosphoshikimate = chorismate + phosphate. The protein operates within metabolic intermediate biosynthesis; chorismate biosynthesis; chorismate from D-erythrose 4-phosphate and phosphoenolpyruvate: step 7/7. Its function is as follows. Catalyzes the anti-1,4-elimination of the C-3 phosphate and the C-6 proR hydrogen from 5-enolpyruvylshikimate-3-phosphate (EPSP) to yield chorismate, which is the branch point compound that serves as the starting substrate for the three terminal pathways of aromatic amino acid biosynthesis. This reaction introduces a second double bond into the aromatic ring system. The polypeptide is Chorismate synthase (Roseiflexus castenholzii (strain DSM 13941 / HLO8)).